Here is a 141-residue protein sequence, read N- to C-terminus: Large ribosomal subunit protein uL11 (141 aa).

The protein belongs to the universal ribosomal protein uL11 family. Part of the ribosomal stalk of the 50S ribosomal subunit. Interacts with L10 and the large rRNA to form the base of the stalk. L10 forms an elongated spine to which L12 dimers bind in a sequential fashion forming a multimeric L10(L12)X complex. One or more lysine residues are methylated.

Its function is as follows. Forms part of the ribosomal stalk which helps the ribosome interact with GTP-bound translation factors. The protein is Large ribosomal subunit protein uL11 of Geobacillus thermodenitrificans (strain NG80-2).